Here is a 380-residue protein sequence, read N- to C-terminus: Beta-1,3-N-acetylglucosaminyltransferase lunatic fringe (380 aa).

Topologically, residues 1–8 (MLKRCGRR) are cytoplasmic. A helical; Signal-anchor for type II membrane protein transmembrane segment spans residues 9–29 (LLLALAGALLACLLVLTADPP). At 30–380 (PPPVPAERGR…TSWCPRSAIF (351 aa)) the chain is on the lumenal side. The interval 85-110 (SRRDVGPPPGGAPRPADGPPRPLAEP) is disordered. The span at 90–107 (GPPPGGAPRPADGPPRPL) shows a compositional bias: pro residues. Arg130 provides a ligand contact to substrate. N-linked (GlcNAc...) asparagine glycosylation is present at Asn168. 2 disulfide bridges follow: Cys169-Cys180 and Cys198-Cys261. Asp202 provides a ligand contact to substrate. Asp203 serves as a coordination point for Mn(2+). Asp291 is an active-site residue. His315 is a Mn(2+) binding site. Cysteines 365 and 374 form a disulfide.

It belongs to the glycosyltransferase 31 family. Mn(2+) is required as a cofactor. The cofactor is Co(2+). A soluble form may be derived from the membrane form by proteolytic processing.

Its subcellular location is the golgi apparatus. It localises to the golgi apparatus membrane. It catalyses the reaction 3-O-(alpha-L-fucosyl)-L-threonyl-[EGF-like domain protein] + UDP-N-acetyl-alpha-D-glucosamine = 3-O-(N-acetyl-beta-D-glucosaminyl-(1-&gt;3)-alpha-L-fucosyl)-L-threonyl-[EGF-like domain protein] + UDP + H(+). It carries out the reaction 3-O-(alpha-L-fucosyl)-L-seryl-[EGF-like domain protein] + UDP-N-acetyl-alpha-D-glucosamine = 3-O-(N-acetyl-beta-D-glucosaminyl-(1-&gt;3)-alpha-L-fucosyl)-L-seryl-[EGF-like domain protein] + UDP + H(+). Functionally, glycosyltransferase that initiates the elongation of O-linked fucose residues attached to EGF-like repeats in the extracellular domain of Notch molecules. Modulates NOTCH1 activity by modifying O-fucose residues at specific EGF-like domains resulting in inhibition of NOTCH1 activation by JAG1 and enhancement of NOTCH1 activation by DLL1 via an increase in its binding to DLL1. Decreases the binding of JAG1 to NOTCH2 but not that of DLL1. Essential mediator of somite segmentation and patterning. The chain is Beta-1,3-N-acetylglucosaminyltransferase lunatic fringe (LFNG) from Bos taurus (Bovine).